Consider the following 1894-residue polypeptide: MEQRRPWPRALEVDSRSVVLLSVVWVLLAPPAAGMPQFSTFHSENRDWTFNHLTVHQGTGAVYVGAINRVYKLTGNLTIQVAHKTGPEEDNKSCYPPLIVQPCSEVLTLTNNVNKLLIIDYSENRLLACGSLYQGVCKLLRLDDLFILVEPSHKKEHYLSSVNKTGTMYGVIVRSEGEDGKLFIGTAVDGKQDYFPTLSSRKLPRDPESSAMLDYELHSDFVSSLIKIPSDTLALVSHFDIFYIYGFASGGFVYFLTVQPETPEGVAINSAGDLFYTSRIVRLCKDDPKFHSYVSLPFGCTRAGVEYRLLQAAYLAKPGDSLAQAFNITSQDDVLFAIFSKGQKQYHHPPDDSALCAFPIRAINLQIKERLQSCYQGEGNLELNWLLGKDVQCTKAPVPIDDNFCGLDINQPLGGSTPVEGLTLYTTSRDRMTSVASYVYNGYSVVFVGTKSGKLKKIRADGPPHGGVQYEMVSVLKDGSPILRDMAFSIDQRYLYVMSERQVTRVPVESCEQYTTCGECLSSGDPHCGWCALHNMCSRRDKCQQAWEPNRFAASISQCVSLAVHPSSISVSEHSRLLSLVVSDAPDLSAGIACAFGNLTEVEGQVSGSQVICISPGPKDVPVIPLDQDWFGLELQLRSKETGKIFVSTEFKFYNCSAHQLCLSCVNSAFRCHWCKYRNLCTHDPTTCSFQEGRINISEDCPQLVPTEEILIPVGEVKPITLKARNLPQPQSGQRGYECVLNIQGAIHRVPALRFNSSSVQCQNSSYQYDGMDISNLAVDFAVVWNGNFIIDNPQDLKVHLYKCAAQRESCGLCLKADRKFECGWCSGERRCTLHQHCTSPSSPWLDWSSHNVKCSNPQITEILTVSGPPEGGTRVTIHGVNLGLDFSEIAHHVQVAGVPCTPLPGEYIIAEQIVCEMGHALVGTTSGPVRLCIGECKPEFMTKSHQQYTFVNPSVLSLNPIRGPESGGTMVTITGHYLGAGSSVAVYLGNQTCEFYGRSMSEIVCVSPPSSNGLGPVPVSVSVDRAHVDSNLQFEYIDDPRVQRIEPEWSIASGHTPLTITGFNLDVIQEPRIRVKFNGKESVNVCKVVNTTTLTCLAPSLTTDYRPGLDTVERPDEFGFVFNNVQSLLIYNDTKFIYYPNPTFELLSPTGVLDQKPGSPIILKGKNLCPPASGGAKLNYTVLIGETPCAVTVSETQLLCEPPNLTGQHKVMVHVGGMVFSPGSVSVISDSLLTLPAIVSIAAGGSLLLIIVIIVLIAYKRKSRENDLTLKRLQMQMDNLESRVALECKEAFAELQTDINELTSDLDRSGIPYLDYRTYAMRVLFPGIEDHPVLRELEVQGNGQQHVEKALKLFAQLINNKVFLLTFIRTLELQRSFSMRDRGNVASLIMTGLQGRLEYATDVLKQLLSDLIDKNLENKNHPKLLLRRTESVAEKMLTNWFAFLLHKFLKECAGEPLFMLYCAIKQQMEKGPIDAITGEARYSLSEDKLIRQQIEYKTLILNCVNPDNENSPEIPVKVLNCDTITQVKEKILDAVYKNVPYSQRPRAVDMDLEWRQGRIARVVLQDEDITTKIEGDWKRLNTLMHYQVSDRSVVALVPKQTSSYNIPASASISRTSISRYDSSFRYTGSPDSLRSRAPMITPDLESGVKVWHLVKNHDHGDQKEGDRGSKMVSEIYLTRLLATKGTLQKFVDDLFETLFSTVHRGSALPLAIKYMFDFLDEQADRHSIHDTDVRHTWKSNCLPLRFWVNVIKNPQFVFDIHKGSITDACLSVVAQTFMDSCSTSEHRLGKDSPSNKLLYAKDIPSYKSWVERYYADIAKLPAISDQDMNAYLAEQSRLHAVEFNMLSALNEIYSYVSKYSEELIGALEQDEQARRQRLAYKVEQLINAMSIES.

An N-terminal signal peptide occupies residues 1–34 (MEQRRPWPRALEVDSRSVVLLSVVWVLLAPPAAG). Residues 35 to 508 (MPQFSTFHSE…SERQVTRVPV (474 aa)) form the Sema domain. The Extracellular portion of the chain corresponds to 35 to 1237 (MPQFSTFHSE…VISDSLLTLP (1203 aa)). Asn-76 and Asn-91 each carry an N-linked (GlcNAc...) asparagine glycan. Cystine bridges form between Cys-94/Cys-103, Cys-129/Cys-137, Cys-284/Cys-405, Cys-300/Cys-356, Cys-374/Cys-393, Cys-511/Cys-528, Cys-517/Cys-559, Cys-520/Cys-537, Cys-531/Cys-543, and Cys-594/Cys-613. N-linked (GlcNAc...) asparagine glycosylation occurs at Asn-327. N-linked (GlcNAc...) asparagine glycosylation is found at Asn-598, Asn-696, and Asn-756. IPT/TIG domains are found at residues 858–951 (PQIT…QYTF), 954–1037 (PSVL…QFEY), 1041–1139 (PRVQ…KFIY), and 1143–1228 (PTFE…SVSV). Asn-1205 is a glycosylation site (N-linked (GlcNAc...) asparagine). A helical transmembrane segment spans residues 1238–1258 (AIVSIAAGGSLLLIIVIIVLI). Residues 1259–1894 (AYKRKSREND…QLINAMSIES (636 aa)) are Cytoplasmic-facing. A coiled-coil region spans residues 1261-1310 (KRKSRENDLTLKRLQMQMDNLESRVALECKEAFAELQTDINELTSDLDRS). Ser-1612 is modified (phosphoserine).

Belongs to the plexin family. Homodimer. The PLXNA2 homodimer interacts with a SEMA6A homodimer, giving rise to a heterotetramer. Interacts directly with NRP1 and NRP2. Interacts with RND1. As to expression, detected in fetal brain.

The protein localises to the cell membrane. Functionally, coreceptor for SEMA3A and SEMA6A. Necessary for signaling by SEMA6A and class 3 semaphorins and subsequent remodeling of the cytoskeleton. Plays a role in axon guidance, invasive growth and cell migration. Class 3 semaphorins bind to a complex composed of a neuropilin and a plexin. The plexin modulates the affinity of the complex for specific semaphorins, and its cytoplasmic domain is required for the activation of down-stream signaling events in the cytoplasm. The sequence is that of Plexin-A2 (PLXNA2) from Homo sapiens (Human).